The chain runs to 215 residues: Putative B3 domain-containing protein Os11g0625400 (215 aa).

The segment at residues 1 to 51 (MTVELEKIAGSFFISKGWKTFVHRTGLLSGQYIRFQVLTPSKINVLLFDKK) is a DNA-binding region (TF-B3 1). Positions 92–117 (SHTSNKETSSDSRTESMTDIPSSSDN) are disordered. The span at 95 to 107 (SNKETSSDSRTES) shows a compositional bias: basic and acidic residues. Positions 108-117 (MTDIPSSSDN) are enriched in polar residues. The TF-B3 2 DNA-binding region spans 123–215 (DIKNYISIIG…PNVKITIDVL (93 aa)).

It localises to the nucleus. This Oryza sativa subsp. japonica (Rice) protein is Putative B3 domain-containing protein Os11g0625400.